Reading from the N-terminus, the 146-residue chain is Hemoglobin subunit beta (146 aa).

Valine 1 carries the N-acetylvaline modification. Residues 2 to 146 (HLTGEEKSAV…VANALAHKYH (145 aa)) enclose the Globin domain. Position 12 is a phosphothreonine (threonine 12). Serine 44 carries the post-translational modification Phosphoserine. Lysine 59 is modified (N6-acetyllysine). Histidine 63 lines the heme b pocket. At lysine 82 the chain carries N6-acetyllysine. Residue histidine 92 participates in heme b binding. An S-nitrosocysteine modification is found at cysteine 93. N6-acetyllysine is present on lysine 144.

It belongs to the globin family. In terms of assembly, heterotetramer of two alpha chains and two beta chains. Red blood cells.

Involved in oxygen transport from the lung to the various peripheral tissues. This chain is Hemoglobin subunit beta (HBB), found in Saguinus oedipus (Cotton-top tamarin).